We begin with the raw amino-acid sequence, 303 residues long: MLWFKNLMVYRLSRDITLRAEEMEKQLASMTFTPCGSQDMAKMGWVPPMGSHSDALTHTANGQIIICARKEEKILPSPVIKQALEAKIQKLEADQGRKLKKTEKDSLKDEVLHSLLPRAFSRFSQTMMWIDTVNGLIMVDCASAKKAEDTLALLRKSLGSLPVVPLALENPIELTLTEWVRSGTVAQGFQLLDEAELKAMLEDGGVIRAKKQDLVSDEIAVHIEAGKVVTKLALDWQQRIQFVMCDDGSIKRLKFCDELRDQNEDIDREDFAQRFDADFILMTGELAALIQSLVEGLGGEAQR.

It belongs to the RdgC family.

The protein resides in the cytoplasm. The protein localises to the nucleoid. Functionally, may be involved in recombination. The polypeptide is Recombination-associated protein RdgC (Salmonella agona (strain SL483)).